Consider the following 252-residue polypeptide: Isoprenyl transferase (252 aa).

Aspartate 32 is a catalytic residue. Aspartate 32 serves as a coordination point for Mg(2+). Residues 33 to 36 (GNGR), tryptophan 37, arginine 45, histidine 49, and 77 to 79 (STE) each bind substrate. The active-site Proton acceptor is the asparagine 80. Residues tryptophan 81, arginine 83, arginine 200, and 206–208 (RLS) each bind substrate. Glutamate 219 contributes to the Mg(2+) binding site.

The protein belongs to the UPP synthase family. As to quaternary structure, homodimer. It depends on Mg(2+) as a cofactor.

In terms of biological role, catalyzes the condensation of isopentenyl diphosphate (IPP) with allylic pyrophosphates generating different type of terpenoids. The sequence is that of Isoprenyl transferase from Listeria innocua serovar 6a (strain ATCC BAA-680 / CLIP 11262).